The chain runs to 276 residues: MKLKFSKMHGLGNDFMVIDGVRQTVSLTPEQIRLLGNRQLGIGFDQLLLVEPAREAGHDFRYRIFNNDGGEVEQCGNGARCFAKFVRDQGLTGKSRIEVETARGVIAPEYLGDGLARVDMGVPRFRPADLPFLADAEALTYSLPLPEGRCEIGIASMGNPHAVQRVDDVDAAPVAEVGPAIESHPAFPQRVNAGFMQIVNRGEIRLRVYERGAGETLACGTGACAAVVCGIRQGLLDARVTVHARGGDIVIEWAGEGSPVIMTGPAVTVFQGEIEL.

The substrate site is built by Asn13, Gln46, and Asn66. Cys75 acts as the Proton donor in catalysis. Substrate-binding positions include 76 to 77 (GN), Asn159, Asn192, and 210 to 211 (ER). Residue Cys219 is the Proton acceptor of the active site. Position 220-221 (220-221 (GT)) interacts with substrate.

Belongs to the diaminopimelate epimerase family. As to quaternary structure, homodimer.

It is found in the cytoplasm. The enzyme catalyses (2S,6S)-2,6-diaminopimelate = meso-2,6-diaminopimelate. It participates in amino-acid biosynthesis; L-lysine biosynthesis via DAP pathway; DL-2,6-diaminopimelate from LL-2,6-diaminopimelate: step 1/1. In terms of biological role, catalyzes the stereoinversion of LL-2,6-diaminopimelate (L,L-DAP) to meso-diaminopimelate (meso-DAP), a precursor of L-lysine and an essential component of the bacterial peptidoglycan. This is Diaminopimelate epimerase from Chromobacterium violaceum (strain ATCC 12472 / DSM 30191 / JCM 1249 / CCUG 213 / NBRC 12614 / NCIMB 9131 / NCTC 9757 / MK).